The following is a 194-amino-acid chain: MTILIQQYTNDENKKLELNNISKLLQNRIILFSQTVDDEICNSIVGQLLYLENEDSTKDIRLFINSPGGSVTAGLSVYDTIQNLSVDVSTICFGLAASMGAVLLAAGVENKRFAFASSRIMIHQPLSKVEAPWSHLDIQIRNGAYFKNLLNNILSFHTKQELKQIETDTERDFFLSATEAKQYGIIDHIFINNN.

The Nucleophile role is filled by Ser-98. His-123 is an active-site residue.

It belongs to the peptidase S14 family. Component of the chloroplastic Clp protease core complex.

Its subcellular location is the plastid. The protein resides in the cyanelle. It catalyses the reaction Hydrolysis of proteins to small peptides in the presence of ATP and magnesium. alpha-casein is the usual test substrate. In the absence of ATP, only oligopeptides shorter than five residues are hydrolyzed (such as succinyl-Leu-Tyr-|-NHMec, and Leu-Tyr-Leu-|-Tyr-Trp, in which cleavage of the -Tyr-|-Leu- and -Tyr-|-Trp bonds also occurs).. Its function is as follows. Cleaves peptides in various proteins in a process that requires ATP hydrolysis. Has a chymotrypsin-like activity. Plays a major role in the degradation of misfolded proteins. The polypeptide is ATP-dependent Clp protease proteolytic subunit (clpP-A) (Cyanophora paradoxa).